A 591-amino-acid polypeptide reads, in one-letter code: Oligopeptide-binding protein OppA (591 aa).

It belongs to the bacterial solute-binding protein 5 family. The complex is composed of an ATP-binding protein (OppD), two transmembrane proteins (OppB and OppC) and a solute-binding protein (OppA).

The protein localises to the periplasm. In terms of biological role, part of the ABC transporter complex OppABCD involved in the uptake of oligopeptides. Peptide-binding protein that shows broad specificity but a moderate preference for hydrophobic oligopeptides and those that are 6-16 amino acids long. This Mycobacterium bovis (strain ATCC BAA-935 / AF2122/97) protein is Oligopeptide-binding protein OppA.